Here is a 430-residue protein sequence, read N- to C-terminus: MTSVVVVGTQWGDEGKGKITDFLSANAEVIARYQGGDNAGHTIVIDGKKYKLHLIPSGIFFPEKISVIGNGMVVNPKSLVKELNYLHEEGVTTDNLRISDRAHVILPYHIELDRLQEEAKGDNKIGTTIKGIGPAYMDKAARVGIRIADLLDKDIFRERLERNLTEKNRLFEKLYDSTAISFDDIFEEYYEYGQQIKQYVTDTSVILNDALDQGKRVLFEGAQGVMLDIDQGTYPFVTSSNPVAGGVTIGSGVGPSKIDKVVGVCKAYTSRVGDGPFPTELFDEVGNRIRDIGHEYGTTTGRPRRVGWFDSVVMRHSRRVSGITNLSLNSIDVLSGLDTVKICVAYDLDGQRIDHYPASLEQLKRCKPIYEELPGWPEDITGVRSLEDLPENARNYVRRVSELVGVRISTFSVGPGREQTNILESVWSNL.

GTP is bound by residues Gly12 to Lys18 and Gly40 to Thr42. Catalysis depends on Asp13, which acts as the Proton acceptor. Residues Asp13 and Gly40 each coordinate Mg(2+). IMP-binding positions include Asp13 to Lys16, Asn38 to His41, Thr128, Arg142, Gln223, Thr238, and Arg302. The active-site Proton donor is the His41. Thr298–Arg304 is a substrate binding site. GTP contacts are provided by residues Arg304, Ser330–Asp332, and Ser412–Gly414.

The protein belongs to the adenylosuccinate synthetase family. Homodimer. Mg(2+) serves as cofactor.

Its subcellular location is the cytoplasm. The enzyme catalyses IMP + L-aspartate + GTP = N(6)-(1,2-dicarboxyethyl)-AMP + GDP + phosphate + 2 H(+). The protein operates within purine metabolism; AMP biosynthesis via de novo pathway; AMP from IMP: step 1/2. Its function is as follows. Plays an important role in the de novo pathway of purine nucleotide biosynthesis. Catalyzes the first committed step in the biosynthesis of AMP from IMP. The protein is Adenylosuccinate synthetase of Streptococcus sanguinis (strain SK36).